A 354-amino-acid polypeptide reads, in one-letter code: MGSNQDDQAFLFAMQLASASVLPMVLKTAIELDLLETIAKAGPHGSVSSSELVAQLPKVNNPEAPVMIDRICSLLASYSVLTCTLKETADGCAERFYGLAPVCKFLIKNDAGVSLAPLLLMNQDKVLMESWYYLKDPVLDGGIPFNKAYGMSAFEYHGKDQRFNKVFNSGMFNHSTMTMKKIVELYNGFSGLKTLVDVGGGTGASLNMITSKHKSLKGINFDLPHVIADATTYQGIEHVGGDMFESVPKGDAIFMKWILHDWSDAHCLQVLKNCYKSLPENGKVIVAECILPEAPDTTPATQNVIHIDVIMLAHNPGGKERTEKEFEALAKGAGFKGFNKAACALNTWVMEFCK.

Met121–Leu127 lines the substrate pocket. Residues Ala153–Met171 are substrate binding. Residues Gly199, Asp222, Asp242, Met243, and Lys256 each coordinate S-adenosyl-L-methionine. His260 serves as the catalytic Proton acceptor.

The protein belongs to the class I-like SAM-binding methyltransferase superfamily. Cation-independent O-methyltransferase family. COMT subfamily. As to quaternary structure, homodimer.

It carries out the reaction (E)-caffeate + S-adenosyl-L-methionine = (E)-ferulate + S-adenosyl-L-homocysteine + H(+). The protein operates within aromatic compound metabolism; phenylpropanoid biosynthesis. Functionally, catalyzes the conversion of caffeic acid to ferulic acid and of 5-hydroxyferulic acid to sinapic acid. The resulting products may subsequently be converted to the corresponding alcohols that are incorporated into lignins. The polypeptide is Caffeic acid 3-O-methyltransferase (Zinnia elegans (Garden zinnia)).